Reading from the N-terminus, the 173-residue chain is Nicotinamide-nucleotide adenylyltransferase (173 aa).

This sequence belongs to the archaeal NMN adenylyltransferase family.

It is found in the cytoplasm. The catalysed reaction is beta-nicotinamide D-ribonucleotide + ATP + H(+) = diphosphate + NAD(+). It functions in the pathway cofactor biosynthesis; NAD(+) biosynthesis; NAD(+) from nicotinamide D-ribonucleotide: step 1/1. The chain is Nicotinamide-nucleotide adenylyltransferase (ffdC) from Methanolobus tindarius.